The following is a 537-amino-acid chain: Small conductance calcium-activated potassium channel protein 1 (537 aa).

The segment covering 1-10 (MSSHSHNGSV) has biased composition (polar residues). Residues 1–90 (MSSHSHNGSV…GKPPTVSHRL (90 aa)) form a disordered region. Positions 65–76 (QEEEEEEEEEED) are enriched in acidic residues. Residues 108 to 128 (LIFGMFGIVVMVTETELSWGV) traverse the membrane as a helical segment. The helical transmembrane segment at 137–157 (FALKCLISLSTVILLGLVILY) threads the bilayer. A helical transmembrane segment spans residues 176–196 (IAMTWERVSLISLELVVCAIH). Residues 225–245 (VLLSIPMFLRLYLLARVMLLH) form a helical membrane-spanning segment. The chain crosses the membrane as a helical span at residues 274 to 294 (LMTICPGTVLLVFSVSSWIVA). An intramembrane region (pore-forming) is located at residues 314-334 (FLGAMWLISITFLSIGYGDMV). The segment S6 stretch occupies residues 343 to 363 (VCLLTGIMGAGCTALVVAVVA). Residues 381-460 (DTQLTKRVKN…LAELAKAQSI (80 aa)) form a calmodulin-binding region.

Belongs to the potassium channel KCNN family. KCa2.1/KCNN1 subfamily. Homodimer. Heteromultimer with KCNN2 and KCNN3. The complex is composed of 4 channel subunits each of which binds to a calmodulin subunit which regulates the channel activity through calcium-binding. Interacts with calmodulin. Highest expression in brain and liver with lower levels in heart, testis, kidney and colon. In colon, detected in smooth muscle cells. Expressed in atrial and ventricular myocytes with higher levels in atrial myocytes.

It localises to the membrane. The protein resides in the cytoplasm. It is found in the myofibril. The protein localises to the sarcomere. Its subcellular location is the z line. It carries out the reaction K(+)(in) = K(+)(out). With respect to regulation, inhibited by bee venom neurotoxin apamin. Inhibited by d-tubocurarine and tetraethylammonium (TEA). In terms of biological role, small conductance calcium-activated potassium channel that mediates the voltage-independent transmembrane transfer of potassium across the cell membrane through a constitutive interaction with calmodulin which binds the intracellular calcium allowing its opening. The current is characterized by a voltage-independent activation, an intracellular calcium concentration increase-dependent activation and a single-channel conductance of about 3 picosiemens. Also presents an inwardly rectifying current, thus reducing its already small outward conductance of potassium ions, which is particularly the case when the membrane potential displays positive values, above + 20 mV. Activation is followed by membrane hyperpolarization. Thought to regulate neuronal excitability by contributing to the slow component of synaptic afterhyperpolarization. The chain is Small conductance calcium-activated potassium channel protein 1 from Mus musculus (Mouse).